The primary structure comprises 354 residues: Photosystem II D2 protein (354 aa).

T2 is subject to N-acetylthreonine. A Phosphothreonine modification is found at T2. The chain crosses the membrane as a helical span at residues 42–62; the sequence is CAYFALGGWFTGTTFVTSWYT. Residue H119 coordinates chlorophyll a. Residues 126–142 traverse the membrane as a helical segment; sequence GFMLRQFELARSVQLRP. Residues Q131 and N144 each contribute to the pheophytin a site. A helical transmembrane segment spans residues 154–167; the sequence is VFVSVFLIYPLGQS. H199 provides a ligand contact to chlorophyll a. The helical transmembrane segment at 209 to 229 threads the bilayer; sequence AALLCAIHGATVENTLFEDGD. H216 and F263 together coordinate a plastoquinone. Residue H216 participates in Fe cation binding. Residue H270 coordinates Fe cation. A helical transmembrane segment spans residues 280–296; that stretch reads GLWMSALGVVGLALNLR.

The protein belongs to the reaction center PufL/M/PsbA/D family. PSII is composed of 1 copy each of membrane proteins PsbA, PsbB, PsbC, PsbD, PsbE, PsbF, PsbH, PsbI, PsbJ, PsbK, PsbL, PsbM, PsbT, PsbX, PsbY, PsbZ, Psb30/Ycf12, at least 3 peripheral proteins of the oxygen-evolving complex and a large number of cofactors. It forms dimeric complexes. Requires The D1/D2 heterodimer binds P680, chlorophylls that are the primary electron donor of PSII, and subsequent electron acceptors. It shares a non-heme iron and each subunit binds pheophytin, quinone, additional chlorophylls, carotenoids and lipids. There is also a Cl(-1) ion associated with D1 and D2, which is required for oxygen evolution. The PSII complex binds additional chlorophylls, carotenoids and specific lipids. as cofactor.

The protein localises to the plastid. It localises to the chloroplast thylakoid membrane. It carries out the reaction 2 a plastoquinone + 4 hnu + 2 H2O = 2 a plastoquinol + O2. Its function is as follows. Photosystem II (PSII) is a light-driven water:plastoquinone oxidoreductase that uses light energy to abstract electrons from H(2)O, generating O(2) and a proton gradient subsequently used for ATP formation. It consists of a core antenna complex that captures photons, and an electron transfer chain that converts photonic excitation into a charge separation. The D1/D2 (PsbA/PsbD) reaction center heterodimer binds P680, the primary electron donor of PSII as well as several subsequent electron acceptors. D2 is needed for assembly of a stable PSII complex. The sequence is that of Photosystem II D2 protein from Piper cenocladum (Ant piper).